Consider the following 239-residue polypeptide: 1-(5-phosphoribosyl)-5-[(5-phosphoribosylamino)methylideneamino] imidazole-4-carboxamide isomerase (239 aa).

Asp-8 acts as the Proton acceptor in catalysis. The active-site Proton donor is Asp-129.

Belongs to the HisA/HisF family.

Its subcellular location is the cytoplasm. It carries out the reaction 1-(5-phospho-beta-D-ribosyl)-5-[(5-phospho-beta-D-ribosylamino)methylideneamino]imidazole-4-carboxamide = 5-[(5-phospho-1-deoxy-D-ribulos-1-ylimino)methylamino]-1-(5-phospho-beta-D-ribosyl)imidazole-4-carboxamide. It participates in amino-acid biosynthesis; L-histidine biosynthesis; L-histidine from 5-phospho-alpha-D-ribose 1-diphosphate: step 4/9. The polypeptide is 1-(5-phosphoribosyl)-5-[(5-phosphoribosylamino)methylideneamino] imidazole-4-carboxamide isomerase (Legionella pneumophila (strain Lens)).